A 539-amino-acid polypeptide reads, in one-letter code: Diacylglycerol O-acyltransferase 1 (539 aa).

The tract at residues 1 to 104 (MAISDMPEST…NDGGEKIANG (104 aa)) is disordered. Positions 33–52 (TETTEVSDSNSKTTDPDSGN) are enriched in polar residues. Positions 56–80 (ESVRVRDSSTDESLARKSCEDDGSR) are enriched in basic and acidic residues. 7 helical membrane-spanning segments follow: residues 143-163 (HAGL…RLII), 187-207 (WPLL…FVVE), 219-239 (VVLL…VFVI), 244-264 (SVVL…LKLV), 294-314 (YPYS…TLCY), 334-354 (VKLI…INPI), and 383-403 (VWLC…AELL). The FYXDWWN motif signature appears at 410–416 (FYKDWWN). The next 3 membrane-spanning stretches (helical) occupy residues 451–471 (GVAI…CIAV), 473–493 (CHIF…LVLI), and 506–526 (VGNM…CVLL). Histidine 465 is a catalytic residue.

Belongs to the membrane-bound acyltransferase family. Sterol o-acyltransferase subfamily.

The protein resides in the endoplasmic reticulum membrane. It carries out the reaction an acyl-CoA + a 1,2-diacyl-sn-glycerol = a triacyl-sn-glycerol + CoA. The protein operates within glycerolipid metabolism; triacylglycerol biosynthesis. Major contributor to triacylglycerol (TAG) synthesis and oil accumulation in developing seeds. Catalyzes the acylation of the sn-3 hydroxy group of sn-1,2-diacylglycerol using acyl-CoA. Has a marked preference for oleoyl-CoA as substrate. In Corylus americana (American hazelnut), this protein is Diacylglycerol O-acyltransferase 1.